A 117-amino-acid polypeptide reads, in one-letter code: Ribosome-binding factor A (117 aa).

This sequence belongs to the RbfA family. In terms of assembly, monomer. Binds 30S ribosomal subunits, but not 50S ribosomal subunits or 70S ribosomes.

The protein resides in the cytoplasm. Functionally, one of several proteins that assist in the late maturation steps of the functional core of the 30S ribosomal subunit. Associates with free 30S ribosomal subunits (but not with 30S subunits that are part of 70S ribosomes or polysomes). Required for efficient processing of 16S rRNA. May interact with the 5'-terminal helix region of 16S rRNA. This Petrotoga mobilis (strain DSM 10674 / SJ95) protein is Ribosome-binding factor A.